We begin with the raw amino-acid sequence, 327 residues long: Malate dehydrogenase (327 aa).

11-17 lines the NAD(+) pocket; that stretch reads GAAGQIS. The substrate site is built by arginine 92 and arginine 98. NAD(+) is bound by residues asparagine 105, glutamine 112, and 129 to 131; that span reads VGN. The substrate site is built by asparagine 131 and arginine 162. Histidine 187 (proton acceptor) is an active-site residue.

This sequence belongs to the LDH/MDH superfamily. MDH type 2 family.

It carries out the reaction (S)-malate + NAD(+) = oxaloacetate + NADH + H(+). In terms of biological role, catalyzes the reversible oxidation of malate to oxaloacetate. In Nitrosomonas europaea (strain ATCC 19718 / CIP 103999 / KCTC 2705 / NBRC 14298), this protein is Malate dehydrogenase.